A 124-amino-acid polypeptide reads, in one-letter code: SKSSTETPPSYNQLNYNENLLRFFNSKPVTAPVELDPPKGESSYVSSAREDARSTLSPVHGFEGSGGSGSSGNFTTGSNVRMSSVTNTSNAGTGTSSAGGNGNGGSGASHAPPVTVTLTESLLN.

The segment at 30–124 is disordered; sequence TAPVELDPPK…TVTLTESLLN (95 aa). Positions 71–96 are enriched in low complexity; sequence SGNFTTGSNVRMSSVTNTSNAGTGTS. The segment covering 97-107 has biased composition (gly residues); sequence SAGGNGNGGSG.

In terms of assembly, forms a heterodimer with timeless (TIM); the complex then translocates into the nucleus. Post-translationally, phosphorylated with a circadian rhythmicity, probably by the double-time protein (dbt). Phosphorylation could be implicated in the stability of per monomer and in the formation of heterodimer per-tim.

The protein localises to the nucleus. The protein resides in the cytoplasm. It is found in the perinuclear region. In terms of biological role, essential for biological clock functions. Determines the period length of circadian and ultradian rhythms; an increase in PER dosage leads to shortened circadian rhythms and a decrease leads to lengthened circadian rhythms. Essential for the circadian rhythmicity of locomotor activity, eclosion behavior, and for the rhythmic component of the male courtship song that originates in the thoracic nervous system. The biological cycle depends on the rhythmic formation and nuclear localization of the TIM-PER complex. Light induces the degradation of TIM, which promotes elimination of PER. Nuclear activity of the heterodimer coordinatively regulates PER and TIM transcription through a negative feedback loop. Behaves as a negative element in circadian transcriptional loop. Does not appear to bind DNA, suggesting indirect transcriptional inhibition. The protein is Period circadian protein (per) of Hirtodrosophila pictiventris (Fruit fly).